The primary structure comprises 451 residues: Probable beta-1,4-xylosyltransferase GT43E (451 aa).

Residues 1 to 88 (MVSSRRNTGG…SKSRGLSCKR (88 aa)) lie on the Cytoplasmic side of the membrane. A helical; Signal-anchor for type II membrane protein transmembrane segment spans residues 89–109 (LAFHLFVCFMVGIFIGFMPFF). Residues 110–451 (SVDVSQKIVS…KNLDAVIPVT (342 aa)) are Lumenal-facing. Residues N260 and N366 are each glycosylated (N-linked (GlcNAc...) asparagine).

It belongs to the glycosyltransferase 43 family.

The protein localises to the golgi apparatus membrane. Its function is as follows. Probable beta-1,4-xylosyltransferase involved in xylan biosynthesis in cell walls. The chain is Probable beta-1,4-xylosyltransferase GT43E from Oryza sativa subsp. japonica (Rice).